The primary structure comprises 31 residues: Protein YmiC (31 aa).

Residues tryptophan 9–isoleucine 29 traverse the membrane as a helical segment.

It is found in the cell inner membrane. The sequence is that of Protein YmiC from Escherichia coli (strain K12).